Here is a 224-residue protein sequence, read N- to C-terminus: tRNA (guanine-N(7)-)-methyltransferase (224 aa).

Glu45, Glu70, Asp97, and Asp119 together coordinate S-adenosyl-L-methionine. Asp119 is a catalytic residue. Substrate contacts are provided by residues Lys123, Asp155, and 199 to 202 (TEYE).

Belongs to the class I-like SAM-binding methyltransferase superfamily. TrmB family.

It catalyses the reaction guanosine(46) in tRNA + S-adenosyl-L-methionine = N(7)-methylguanosine(46) in tRNA + S-adenosyl-L-homocysteine. It functions in the pathway tRNA modification; N(7)-methylguanine-tRNA biosynthesis. In terms of biological role, catalyzes the formation of N(7)-methylguanine at position 46 (m7G46) in tRNA. The protein is tRNA (guanine-N(7)-)-methyltransferase of Ureaplasma parvum serovar 3 (strain ATCC 27815 / 27 / NCTC 11736).